Here is a 427-residue protein sequence, read N- to C-terminus: Enolase (427 aa).

Q163 serves as a coordination point for (2R)-2-phosphoglycerate. E205 acts as the Proton donor in catalysis. D242, E285, and D312 together coordinate Mg(2+). Residues K337, R366, S367, and K388 each contribute to the (2R)-2-phosphoglycerate site. K337 serves as the catalytic Proton acceptor.

Belongs to the enolase family. Mg(2+) serves as cofactor.

It is found in the cytoplasm. The protein localises to the secreted. Its subcellular location is the cell surface. It carries out the reaction (2R)-2-phosphoglycerate = phosphoenolpyruvate + H2O. It participates in carbohydrate degradation; glycolysis; pyruvate from D-glyceraldehyde 3-phosphate: step 4/5. In terms of biological role, catalyzes the reversible conversion of 2-phosphoglycerate (2-PG) into phosphoenolpyruvate (PEP). It is essential for the degradation of carbohydrates via glycolysis. The protein is Enolase of Xanthobacter autotrophicus (strain ATCC BAA-1158 / Py2).